Consider the following 146-residue polypeptide: Large ribosomal subunit protein uL15 (146 aa).

The segment covering 1-13 (MKLHELHSAEGSR) has biased composition (basic and acidic residues). Positions 1 to 55 (MKLHELHSAEGSRRNRKRVGRGTSSGYGKTSGRGQKGQLARQGGHTRLGFEGGQM) are disordered. Over residues 23–35 (TSSGYGKTSGRGQ) the composition is skewed to gly residues.

This sequence belongs to the universal ribosomal protein uL15 family. As to quaternary structure, part of the 50S ribosomal subunit.

Its function is as follows. Binds to the 23S rRNA. The polypeptide is Large ribosomal subunit protein uL15 (Lactobacillus acidophilus (strain ATCC 700396 / NCK56 / N2 / NCFM)).